A 97-amino-acid chain; its full sequence is Aspartyl/glutamyl-tRNA(Asn/Gln) amidotransferase subunit C (97 aa).

It belongs to the GatC family. In terms of assembly, heterotrimer of A, B and C subunits.

It carries out the reaction L-glutamyl-tRNA(Gln) + L-glutamine + ATP + H2O = L-glutaminyl-tRNA(Gln) + L-glutamate + ADP + phosphate + H(+). The enzyme catalyses L-aspartyl-tRNA(Asn) + L-glutamine + ATP + H2O = L-asparaginyl-tRNA(Asn) + L-glutamate + ADP + phosphate + 2 H(+). Allows the formation of correctly charged Asn-tRNA(Asn) or Gln-tRNA(Gln) through the transamidation of misacylated Asp-tRNA(Asn) or Glu-tRNA(Gln) in organisms which lack either or both of asparaginyl-tRNA or glutaminyl-tRNA synthetases. The reaction takes place in the presence of glutamine and ATP through an activated phospho-Asp-tRNA(Asn) or phospho-Glu-tRNA(Gln). The sequence is that of Aspartyl/glutamyl-tRNA(Asn/Gln) amidotransferase subunit C from Prochlorococcus marinus (strain MIT 9313).